The primary structure comprises 540 residues: Cytochrome P450 monooxygenase ORF5 (540 aa).

Residues 48–68 (YHALGTAIALFACACAYALVA) form a helical membrane-spanning segment. Residues Asn-376 and Asn-460 are each glycosylated (N-linked (GlcNAc...) asparagine). Cys-483 contributes to the heme binding site.

This sequence belongs to the cytochrome P450 family. It depends on heme as a cofactor.

The protein resides in the membrane. It participates in sesquiterpene biosynthesis. Its function is as follows. Cytochrome P450 monooxygenase; part of the gene cluster that mediates the biosynthesis of PR-toxin, a bicyclic sesquiterpene belonging to the eremophilane class and acting as a mycotoxin. The first step of the pathway is catalyzed by the aristolochene synthase which performs the cyclization of trans,trans-farnesyl diphosphate (FPP) to the bicyclic sesquiterpene aristolochene. Following the formation of aristolochene, the non-oxygenated aristolochene is converted to the trioxygenated intermediate eremofortin B, via 7-epi-neopetasone. This conversion appears to involve three enzymes, a hydroxysterol oxidase-like enzyme, the quinone-oxidase prx3 that forms the quinone-type-structure in the bicyclic nucleus of aristolochene with the C8-oxo group and the C-3 hydroxyl group, and the P450 monooxygenase ORF6 that introduces the epoxide at the double bond between carbons 1 and 2. No monoxy or dioxy-intermediates have been reported to be released to the broth, so these three early oxidative reactions may be coupled together. Eremofortin B is further oxidized by another P450 monooxygenase, that introduces a second epoxide between carbons 7 and 11 prior to acetylation to eremofortin A by the acetyltransferase ORF8. The second epoxidation may be performed by a second P450 monooxygenase. After the acetylation step, eremofortin A is converted to eremofortin C and then to PR-toxin. First the conversion of eremofortin A to eremofortin C proceeds by oxidation of the side chain of the molecule at C-12 and is catalyzed by the short-chain oxidoreductase prx1. The cytochrome P450 monooxygenase ORF6 is probably also involved in this step. The primary alcohol formed at C-12 is finally oxidized by the short-chain alcohol dehydrogenase prx4 that forms PR-toxin. The polypeptide is Cytochrome P450 monooxygenase ORF5 (Penicillium roqueforti (strain FM164)).